Consider the following 102-residue polypeptide: Small ribosomal subunit protein uS10 (102 aa).

It belongs to the universal ribosomal protein uS10 family. As to quaternary structure, part of the 30S ribosomal subunit.

In terms of biological role, involved in the binding of tRNA to the ribosomes. The protein is Small ribosomal subunit protein uS10 of Geobacillus kaustophilus (strain HTA426).